We begin with the raw amino-acid sequence, 710 residues long: TRP-like ion channel pkd2 (710 aa).

Residues 1–23 (MRLWRSPLLLLVVVVELFSWADA) form the signal peptide. 9 consecutive transmembrane segments (helical) span residues 173–193 (WVMC…SPVL), 197–217 (ALWE…IQAL), 322–342 (FFAT…LVAM), 376–396 (FFYR…MWEI), 404–424 (LAFL…YAFV), 466–486 (FFYF…FIGF), 492–512 (KVQG…MVIL), 525–545 (IGVA…CQAF), and 555–575 (IGII…LGIF). A phosphoserine mark is found at Ser-599 and Ser-632. Positions 689–710 (RISENNNNAERRRKPLPNNAFR) are disordered.

Belongs to the transient receptor potential (TRP) ion channel family. In terms of assembly, interacts with rho1.

Its subcellular location is the cell membrane. It is found in the golgi apparatus membrane. Its function is as follows. Acts as a key signaling component in the regulation of cell shape and cell wall synthesis through interaction with GTPase Rho1. This Schizosaccharomyces pombe (strain 972 / ATCC 24843) (Fission yeast) protein is TRP-like ion channel pkd2 (pkd2).